The primary structure comprises 421 residues: Atrochrysone carboxyl ACP thioesterase (421 aa).

The Zn(2+) site is built by H207, H209, D211, and H212. Residue D211 is the Proton donor/acceptor of the active site.

The protein belongs to the metallo-beta-lactamase superfamily. Zn(2+) serves as cofactor. Specifically expressed in conidia.

It catalyses the reaction atrochrysone carboxyl-[ACP] + H2O = atrochrysone carboxylate + holo-[ACP] + H(+). It participates in secondary metabolite biosynthesis. Atrochrysone carboxyl ACP thioesterase; part of the gene cluster that mediates the biosynthesis of trypacidin, a mycotoxin with antiprotozoal activity and that plays a role in the infection process. The pathway begins with the synthesis of atrochrysone thioester by the polyketide synthase (PKS) tpcC. The atrochrysone carboxyl ACP thioesterase tpcB then breaks the thioester bond and releases the atrochrysone carboxylic acid from tpcC. The decarboxylase tpcK converts atrochrysone carboxylic acid to atrochrysone which is further reduced into emodin anthrone. The next step is performed by the emodin anthrone oxygenase tpcL that catalyzes the oxidation of emodin anthrone to emodin. Emodin O-methyltransferase encoded by tpcA catalyzes methylation of the 8-hydroxy group of emodin to form questin. Ring cleavage of questin by questin oxidase tpcI leads to desmethylsulochrin via several intermediates including questin epoxide. Another methylation step catalyzed by tpcM leads to the formation of sulochrin which is further converted to monomethylsulfochrin by tpcH. Finally, the tpcJ catalyzes the conversion of monomethylsulfochrin to trypacidin. Trypacidin is toxic for human pulmonary and bronchial epithelial cells by initiating the intracellular formation of nitric oxide (NO) and hydrogen peroxide (H(2)O(2)), thus triggering host necrotic cell death. The trypacidin pathway is also able to produce endocrocin via a distinct route from the endocrocin Enc pathway. The chain is Atrochrysone carboxyl ACP thioesterase from Aspergillus fumigatus (strain ATCC MYA-4609 / CBS 101355 / FGSC A1100 / Af293) (Neosartorya fumigata).